We begin with the raw amino-acid sequence, 295 residues long: Ethanolamine ammonia-lyase small subunit (295 aa).

The adenosylcob(III)alamin site is built by valine 207, glutamate 228, and cysteine 258.

This sequence belongs to the EutC family. As to quaternary structure, the basic unit is a heterodimer which dimerizes to form tetramers. The heterotetramers trimerize; 6 large subunits form a core ring with 6 small subunits projecting outwards. Adenosylcob(III)alamin is required as a cofactor.

Its subcellular location is the bacterial microcompartment. The catalysed reaction is ethanolamine = acetaldehyde + NH4(+). The protein operates within amine and polyamine degradation; ethanolamine degradation. Functionally, catalyzes the deamination of various vicinal amino-alcohols to oxo compounds. Allows this organism to utilize ethanolamine as the sole source of nitrogen and carbon in the presence of external vitamin B12. The sequence is that of Ethanolamine ammonia-lyase small subunit from Escherichia coli (strain SMS-3-5 / SECEC).